Reading from the N-terminus, the 589-residue chain is Nicotinate phosphoribosyltransferase (589 aa).

A disordered region spans residues 1–30; it reads MSQSNTPLKRKKTENGYSENGSTTGATSNQ. Positions 15–30 are enriched in polar residues; sequence NGYSENGSTTGATSNQ. Nicotinate-binding residues include Y68 and T256. H259 is subject to Phosphohistidine. Nicotinate is bound at residue R356. 5-phospho-alpha-D-ribose 1-diphosphate is bound at residue T418.

It belongs to the NAPRTase family. The cofactor is Mg(2+). Requires Mn(2+) as cofactor. Post-translationally, transiently phosphorylated on a His residue during the reaction cycle. Phosphorylation strongly increases the affinity for substrates and increases the rate of nicotinate D-ribonucleotide production. Dephosphorylation regenerates the low-affinity form of the enzyme, leading to product release.

The catalysed reaction is nicotinate + 5-phospho-alpha-D-ribose 1-diphosphate + ATP + H2O = nicotinate beta-D-ribonucleotide + ADP + phosphate + diphosphate. It functions in the pathway cofactor biosynthesis; NAD(+) biosynthesis; nicotinate D-ribonucleotide from nicotinate: step 1/1. Catalyzes the first step in the biosynthesis of NAD from nicotinic acid, the ATP-dependent synthesis of beta-nicotinate D-ribonucleotide from nicotinate and 5-phospho-D-ribose 1-phosphate. Helps prevent cellular oxidative stress via its role in NAD biosynthesis. This is Nicotinate phosphoribosyltransferase (naprt) from Dictyostelium discoideum (Social amoeba).